A 266-amino-acid chain; its full sequence is 26 kDa endochitinase 2 (266 aa).

The signal sequence occupies residues 1-23 (MRSLAVVVAVVATVAMAIGTARG). Disulfide bonds link Cys-46-Cys-108, Cys-120-Cys-128, and Cys-227-Cys-259. Glu-90 functions as the Proton donor in the catalytic mechanism.

This sequence belongs to the glycosyl hydrolase 19 family. Chitinase class II subfamily.

The catalysed reaction is Random endo-hydrolysis of N-acetyl-beta-D-glucosaminide (1-&gt;4)-beta-linkages in chitin and chitodextrins.. Defense against chitin-containing fungal pathogens. The protein is 26 kDa endochitinase 2 of Hordeum vulgare (Barley).